The following is a 213-amino-acid chain: Negative modulator of initiation of replication (213 aa).

Interaction with DNA regions lie at residues 116-117 (AV), 145-149 (RTRVY), and 179-185 (NTNSGRK).

Belongs to the SeqA family. As to quaternary structure, homodimer. Polymerizes to form helical filaments.

It is found in the cytoplasm. Negative regulator of replication initiation, which contributes to regulation of DNA replication and ensures that replication initiation occurs exactly once per chromosome per cell cycle. Binds to pairs of hemimethylated GATC sequences in the oriC region, thus preventing assembly of replication proteins and re-initiation at newly replicated origins. Repression is relieved when the region becomes fully methylated. This is Negative modulator of initiation of replication from Haemophilus parainfluenzae (strain T3T1).